Consider the following 461-residue polypeptide: ATP-dependent protease ATPase subunit HslU (461 aa).

Residues isoleucine 18 and 60-65 each bind ATP; that span reads GVGKTE. Positions 157 to 178 are disordered; the sequence is EGSSVKPEPTAQQKESRQKMRK. Aspartate 273, glutamate 339, and arginine 411 together coordinate ATP.

It belongs to the ClpX chaperone family. HslU subfamily. As to quaternary structure, a double ring-shaped homohexamer of HslV is capped on each side by a ring-shaped HslU homohexamer. The assembly of the HslU/HslV complex is dependent on binding of ATP.

It localises to the cytoplasm. ATPase subunit of a proteasome-like degradation complex; this subunit has chaperone activity. The binding of ATP and its subsequent hydrolysis by HslU are essential for unfolding of protein substrates subsequently hydrolyzed by HslV. HslU recognizes the N-terminal part of its protein substrates and unfolds these before they are guided to HslV for hydrolysis. The protein is ATP-dependent protease ATPase subunit HslU of Magnetococcus marinus (strain ATCC BAA-1437 / JCM 17883 / MC-1).